A 198-amino-acid chain; its full sequence is Na(+)-translocating NADH-quinone reductase subunit E (198 aa).

6 helical membrane-spanning segments follow: residues 11 to 31 (SIFIENLALSFFLGMCTFLAV), 40 to 60 (GLGIAVVVVQAIAVPANNLVF), 77 to 97 (FLGFITYIGVIAALVQILEMF), 110 to 130 (GIFLPLITVNCAIFGGVSFMV), 140 to 160 (VVYGVGSGISWALAIVLMAAI), and 176 to 196 (LGITFITAGLMALGFMSFSGI).

It belongs to the NqrDE/RnfAE family. As to quaternary structure, composed of six subunits; NqrA, NqrB, NqrC, NqrD, NqrE and NqrF.

It is found in the cell inner membrane. The enzyme catalyses a ubiquinone + n Na(+)(in) + NADH + H(+) = a ubiquinol + n Na(+)(out) + NAD(+). In terms of biological role, NQR complex catalyzes the reduction of ubiquinone-1 to ubiquinol by two successive reactions, coupled with the transport of Na(+) ions from the cytoplasm to the periplasm. NqrA to NqrE are probably involved in the second step, the conversion of ubisemiquinone to ubiquinol. The chain is Na(+)-translocating NADH-quinone reductase subunit E from Tolumonas auensis (strain DSM 9187 / NBRC 110442 / TA 4).